Reading from the N-terminus, the 393-residue chain is MTHTTLFTSESVSEGHPDKVADQISDAVLDALIGQDPNCRVACEAVVKSGMVFVAGEITTNAWADVEQITRNTVLQIGYNDPHLGFDGETCAVVTAIGKQSPDIVMGVDGREDQELGAGDQGLMFGYASRETDVFMPAPITYAHRLVRQQALLRKNGRLPWLRPDAKSQVTLRYENGKPVAADCIVLSTQHSPEISQESLREAVIDEIIKPIMPPHWLDKHTRFLVNPTGRFVIGGPVGDCGLTGRKIIVDTYGGMARHGGGCFSGKDPSKVDRSGAYAARYVAKNIVAGGLADRCEIQVSYAIGVAEPTSISVETFGTGKIDEVRIQQLIKEHFDLRPGKIIEELNLLRSIYKATATYGHFGREEPEFTWERTDKAEILREAAGLAAANVTN.

His16 serves as a coordination point for ATP. Asp18 lines the Mg(2+) pocket. A K(+)-binding site is contributed by Glu44. L-methionine-binding residues include Glu57 and Gln100. The flexible loop stretch occupies residues 100-110; it reads QSPDIVMGVDG. ATP-binding positions include 165-167, 231-232, Asp240, 246-247, and Lys267; these read DAK, RF, and RK. Asp240 is an L-methionine binding site. Lys271 is an L-methionine binding site.

The protein belongs to the AdoMet synthase family. As to quaternary structure, homotetramer; dimer of dimers. The cofactor is Mg(2+). It depends on K(+) as a cofactor.

It is found in the cytoplasm. The catalysed reaction is L-methionine + ATP + H2O = S-adenosyl-L-methionine + phosphate + diphosphate. It participates in amino-acid biosynthesis; S-adenosyl-L-methionine biosynthesis; S-adenosyl-L-methionine from L-methionine: step 1/1. Catalyzes the formation of S-adenosylmethionine (AdoMet) from methionine and ATP. The overall synthetic reaction is composed of two sequential steps, AdoMet formation and the subsequent tripolyphosphate hydrolysis which occurs prior to release of AdoMet from the enzyme. The chain is S-adenosylmethionine synthase from Coxiella burnetii (strain CbuG_Q212) (Coxiella burnetii (strain Q212)).